The primary structure comprises 481 residues: Probable cytosol aminopeptidase (481 aa).

Mn(2+)-binding residues include lysine 247 and aspartate 252. Residue lysine 259 is part of the active site. Mn(2+) contacts are provided by aspartate 270, aspartate 329, and glutamate 331. Arginine 333 is an active-site residue.

This sequence belongs to the peptidase M17 family. Mn(2+) serves as cofactor.

It localises to the cytoplasm. The enzyme catalyses Release of an N-terminal amino acid, Xaa-|-Yaa-, in which Xaa is preferably Leu, but may be other amino acids including Pro although not Arg or Lys, and Yaa may be Pro. Amino acid amides and methyl esters are also readily hydrolyzed, but rates on arylamides are exceedingly low.. The catalysed reaction is Release of an N-terminal amino acid, preferentially leucine, but not glutamic or aspartic acids.. Its function is as follows. Presumably involved in the processing and regular turnover of intracellular proteins. Catalyzes the removal of unsubstituted N-terminal amino acids from various peptides. The chain is Probable cytosol aminopeptidase from Clostridium tetani (strain Massachusetts / E88).